Reading from the N-terminus, the 148-residue chain is Large ribosomal subunit protein bL9 (148 aa).

The protein belongs to the bacterial ribosomal protein bL9 family.

In terms of biological role, binds to the 23S rRNA. This Methylobacillus flagellatus (strain ATCC 51484 / DSM 6875 / VKM B-1610 / KT) protein is Large ribosomal subunit protein bL9.